The chain runs to 762 residues: Phosphoribosylformylglycinamidine synthase subunit PurL (762 aa).

Histidine 58 is a catalytic residue. ATP-binding residues include tyrosine 61 and arginine 105. Glutamate 107 contacts Mg(2+). Substrate contacts are provided by residues 108 to 111 (SHNH) and arginine 130. Catalysis depends on histidine 109, which acts as the Proton acceptor. Aspartate 131 lines the Mg(2+) pocket. A substrate-binding site is contributed by glutamine 255. Aspartate 283 is a Mg(2+) binding site. 327-329 (ESQ) is a substrate binding site. Residues asparagine 513 and glycine 550 each coordinate ATP. Position 551 (asparagine 551) interacts with Mg(2+). Position 553 (serine 553) interacts with substrate.

The protein belongs to the FGAMS family. As to quaternary structure, monomer. Part of the FGAM synthase complex composed of 1 PurL, 1 PurQ and 2 PurS subunits.

The protein localises to the cytoplasm. The catalysed reaction is N(2)-formyl-N(1)-(5-phospho-beta-D-ribosyl)glycinamide + L-glutamine + ATP + H2O = 2-formamido-N(1)-(5-O-phospho-beta-D-ribosyl)acetamidine + L-glutamate + ADP + phosphate + H(+). It functions in the pathway purine metabolism; IMP biosynthesis via de novo pathway; 5-amino-1-(5-phospho-D-ribosyl)imidazole from N(2)-formyl-N(1)-(5-phospho-D-ribosyl)glycinamide: step 1/2. Part of the phosphoribosylformylglycinamidine synthase complex involved in the purines biosynthetic pathway. Catalyzes the ATP-dependent conversion of formylglycinamide ribonucleotide (FGAR) and glutamine to yield formylglycinamidine ribonucleotide (FGAM) and glutamate. The FGAM synthase complex is composed of three subunits. PurQ produces an ammonia molecule by converting glutamine to glutamate. PurL transfers the ammonia molecule to FGAR to form FGAM in an ATP-dependent manner. PurS interacts with PurQ and PurL and is thought to assist in the transfer of the ammonia molecule from PurQ to PurL. The polypeptide is Phosphoribosylformylglycinamidine synthase subunit PurL (Corynebacterium glutamicum (strain ATCC 13032 / DSM 20300 / JCM 1318 / BCRC 11384 / CCUG 27702 / LMG 3730 / NBRC 12168 / NCIMB 10025 / NRRL B-2784 / 534)).